The following is a 254-amino-acid chain: UPF0328 protein ECU01_0070/ECU01_1540/ECU02_1570/ECU04_0080/ECU08_2100 (254 aa).

Belongs to the UPF0328 family.

The chain is UPF0328 protein ECU01_0070/ECU01_1540/ECU02_1570/ECU04_0080/ECU08_2100 from Encephalitozoon cuniculi (strain GB-M1) (Microsporidian parasite).